Here is a 1170-residue protein sequence, read N- to C-terminus: DNA-directed RNA polymerase subunit beta (1170 aa).

Belongs to the RNA polymerase beta chain family. In terms of assembly, the RNAP catalytic core consists of 2 alpha, 1 beta, 1 beta' and 1 omega subunit. When a sigma factor is associated with the core the holoenzyme is formed, which can initiate transcription.

It catalyses the reaction RNA(n) + a ribonucleoside 5'-triphosphate = RNA(n+1) + diphosphate. DNA-dependent RNA polymerase catalyzes the transcription of DNA into RNA using the four ribonucleoside triphosphates as substrates. The chain is DNA-directed RNA polymerase subunit beta from Corynebacterium urealyticum (strain ATCC 43042 / DSM 7109).